The chain runs to 96 residues: Protein Vpr (96 aa).

The tract at residues 1 to 42 (MEQAPEDQGPQREPHNEWTLELLEELKNEAVRHFPRIWLHGL) is homooligomerization. 3 positions are modified to phosphoserine; by host: Ser-79, Ser-94, and Ser-96.

The protein belongs to the HIV-1 VPR protein family. In terms of assembly, homooligomer, may form homodimer. Interacts with p6-gag region of the Pr55 Gag precursor protein through a (Leu-X-X)4 motif near the C-terminus of the P6gag protein. Interacts with host UNG. May interact with host RAD23A/HHR23A. Interacts with host VPRBP/DCAF1, leading to hijack the CUL4A-RBX1-DDB1-DCAF1/VPRBP complex, mediating ubiquitination of host proteins such as TERT and ZGPAT and arrest of the cell cycle in G2 phase. In terms of processing, phosphorylated on several residues by host. These phosphorylations regulate VPR activity for the nuclear import of the HIV-1 pre-integration complex.

The protein localises to the virion. The protein resides in the host nucleus. Its subcellular location is the host extracellular space. Its function is as follows. During virus entry, plays a role in the transport of the viral pre-integration (PIC) complex to the host nucleus. This function is crucial for viral infection of non-dividing macrophages. May act directly at the nuclear pore complex, by binding nucleoporins phenylalanine-glycine (FG)-repeat regions. Functionally, during virus replication, may deplete host UNG protein, and incude G2-M cell cycle arrest. Acts by targeting specific host proteins for degradation by the 26S proteasome, through association with the cellular CUL4A-DDB1 E3 ligase complex by direct interaction with host VPRPB/DCAF-1. Cell cycle arrest reportedly occurs within hours of infection and is not blocked by antiviral agents, suggesting that it is initiated by the VPR carried into the virion. Additionally, VPR induces apoptosis in a cell cycle dependent manner suggesting that these two effects are mechanistically linked. Detected in the serum and cerebrospinal fluid of AIDS patient, VPR may also induce cell death to bystander cells. The sequence is that of Protein Vpr from Homo sapiens (Human).